A 185-amino-acid polypeptide reads, in one-letter code: Ribosome-recycling factor (185 aa).

This sequence belongs to the RRF family.

It localises to the cytoplasm. Its function is as follows. Responsible for the release of ribosomes from messenger RNA at the termination of protein biosynthesis. May increase the efficiency of translation by recycling ribosomes from one round of translation to another. This Streptococcus equi subsp. equi (strain 4047) protein is Ribosome-recycling factor.